The primary structure comprises 493 residues: Glutamyl-tRNA(Gln) amidotransferase subunit A (493 aa).

Active-site charge relay system residues include Lys78 and Ser158. The Acyl-ester intermediate role is filled by Ser182.

Belongs to the amidase family. GatA subfamily. In terms of assembly, heterotrimer of A, B and C subunits.

It carries out the reaction L-glutamyl-tRNA(Gln) + L-glutamine + ATP + H2O = L-glutaminyl-tRNA(Gln) + L-glutamate + ADP + phosphate + H(+). Allows the formation of correctly charged Gln-tRNA(Gln) through the transamidation of misacylated Glu-tRNA(Gln) in organisms which lack glutaminyl-tRNA synthetase. The reaction takes place in the presence of glutamine and ATP through an activated gamma-phospho-Glu-tRNA(Gln). This is Glutamyl-tRNA(Gln) amidotransferase subunit A from Rickettsia bellii (strain RML369-C).